A 269-amino-acid polypeptide reads, in one-letter code: Shikimate dehydrogenase (NADP(+)) (269 aa).

Shikimate contacts are provided by residues 17-19 (SKS) and T64. The active-site Proton acceptor is K68. E80 serves as a coordination point for NADP(+). Positions 89 and 105 each coordinate shikimate. NADP(+) contacts are provided by residues 130-134 (GAGGA), 154-159 (NRTHAK), and M213. Y215 serves as a coordination point for shikimate. G237 provides a ligand contact to NADP(+).

Belongs to the shikimate dehydrogenase family. In terms of assembly, homodimer.

It catalyses the reaction shikimate + NADP(+) = 3-dehydroshikimate + NADPH + H(+). It participates in metabolic intermediate biosynthesis; chorismate biosynthesis; chorismate from D-erythrose 4-phosphate and phosphoenolpyruvate: step 4/7. In terms of biological role, involved in the biosynthesis of the chorismate, which leads to the biosynthesis of aromatic amino acids. Catalyzes the reversible NADPH linked reduction of 3-dehydroshikimate (DHSA) to yield shikimate (SA). This chain is Shikimate dehydrogenase (NADP(+)), found in Neisseria flavescens.